The following is a 178-amino-acid chain: Gamma-crystallin S (178 aa).

Ser2 carries the N-acetylserine modification. The tract at residues 2–5 is N-terminal arm; sequence SKTG. 2 consecutive Beta/gamma crystallin 'Greek key' domains span residues 6–44 and 45–87; these read AKIS…RVEG and GTWA…RAVH. A connecting peptide region spans residues 88 to 93; it reads LSSGGQ. 2 Beta/gamma crystallin 'Greek key' domains span residues 94 to 134 and 135 to 177; these read YKIQ…KVLE and GTWI…RRIV.

Belongs to the beta/gamma-crystallin family. As to quaternary structure, monomer.

In terms of biological role, crystallins are the dominant structural components of the vertebrate eye lens. The sequence is that of Gamma-crystallin S (Crygs) from Rattus norvegicus (Rat).